Consider the following 700-residue polypeptide: Elongation factor G (700 aa).

A tr-type G domain is found at 10 to 286 (TKVRNIGIMA…AVIDYLPSPL (277 aa)). GTP-binding positions include 19–26 (AHIDAGKT), 83–87 (DTPGH), and 137–140 (NKMD).

Belongs to the TRAFAC class translation factor GTPase superfamily. Classic translation factor GTPase family. EF-G/EF-2 subfamily.

The protein resides in the cytoplasm. In terms of biological role, catalyzes the GTP-dependent ribosomal translocation step during translation elongation. During this step, the ribosome changes from the pre-translocational (PRE) to the post-translocational (POST) state as the newly formed A-site-bound peptidyl-tRNA and P-site-bound deacylated tRNA move to the P and E sites, respectively. Catalyzes the coordinated movement of the two tRNA molecules, the mRNA and conformational changes in the ribosome. The polypeptide is Elongation factor G (Kineococcus radiotolerans (strain ATCC BAA-149 / DSM 14245 / SRS30216)).